The primary structure comprises 151 residues: Ribosome maturation factor RimP (151 aa).

The protein belongs to the RimP family.

Its subcellular location is the cytoplasm. In terms of biological role, required for maturation of 30S ribosomal subunits. The polypeptide is Ribosome maturation factor RimP (Shewanella baltica (strain OS223)).